A 175-amino-acid polypeptide reads, in one-letter code: Large ribosomal subunit protein uL22 (175 aa).

A disordered region spans residues 113–175 (VESRPVKDQR…EASETKGGSD (63 aa)). The span at 136-154 (KTAGRAPAKKAGASSGATK) shows a compositional bias: low complexity. Residues 166–175 (EASETKGGSD) show a composition bias toward basic and acidic residues.

Belongs to the universal ribosomal protein uL22 family. Part of the 50S ribosomal subunit.

Functionally, this protein binds specifically to 23S rRNA; its binding is stimulated by other ribosomal proteins, e.g. L4, L17, and L20. It is important during the early stages of 50S assembly. It makes multiple contacts with different domains of the 23S rRNA in the assembled 50S subunit and ribosome. In terms of biological role, the globular domain of the protein is located near the polypeptide exit tunnel on the outside of the subunit, while an extended beta-hairpin is found that lines the wall of the exit tunnel in the center of the 70S ribosome. The polypeptide is Large ribosomal subunit protein uL22 (Mycobacterium leprae (strain TN)).